Consider the following 142-residue polypeptide: Large ribosomal subunit protein uL13 (142 aa).

This sequence belongs to the universal ribosomal protein uL13 family. Part of the 50S ribosomal subunit.

This protein is one of the early assembly proteins of the 50S ribosomal subunit, although it is not seen to bind rRNA by itself. It is important during the early stages of 50S assembly. This is Large ribosomal subunit protein uL13 from Stenotrophomonas maltophilia (strain K279a).